Reading from the N-terminus, the 782-residue chain is General transcription and DNA repair factor IIH helicase/translocase subunit XPB (782 aa).

Over residues 1 to 11 (MGKRDRADRDK) the composition is skewed to basic and acidic residues. Disordered stretches follow at residues 1–51 (MGKR…ESGT) and 218–241 (SAIS…PQGK). The short motif at 6–18 (RADRDKKKSRKRH) is the Nuclear localization signal element. Positions 21–30 (DEEDDEEDAP) are enriched in acidic residues. The segment covering 218–236 (SAISKTAESSGGPSTSRVT) has biased composition (polar residues). The Helicase ATP-binding domain maps to 327–488 (MFGNGRARSG…DLNFLIGPKL (162 aa)). 340–347 (LPCGAGKS) provides a ligand contact to ATP. The DEVH box motif lies at 441-444 (DEVH). In terms of domain architecture, Helicase C-terminal spans 542–702 (RACQFLIKFH…LAGMEEEDLA (161 aa)). Residue S686 is modified to Phosphoserine. S751 bears the Phosphoserine; by CK2 mark.

The protein belongs to the helicase family. RAD25/XPB subfamily. As to quaternary structure, component of the 7-subunit TFIIH core complex composed of XPB/ERCC3, XPD/ERCC2, GTF2H1, GTF2H2, GTF2H3, GTF2H4 and GTF2H5, which is active in NER. The core complex associates with the 3-subunit CDK-activating kinase (CAK) module composed of CCNH/cyclin H, CDK7 and MNAT1 to form the 10-subunit holoenzyme (holo-TFIIH) active in transcription. Interacts with PUF60. Interacts with ATF7IP. Interacts with KAT2A; leading to KAT2A recruitment to promoters and acetylation of histones. Part of TBP-based Pol II pre-initiation complex (PIC), in which Pol II core assembles with general transcription factors and other specific initiation factors including GTF2E1, GTF2E2, GTF2F1, GTF2F2, TCEA1, ERCC2, ERCC3, GTF2H2, GTF2H3, GTF2H4, GTF2H5, GTF2A1, GTF2A2, GTF2B and TBP; this large multi-subunit PIC complex mediates DNA unwinding and targets Pol II core to the transcription start site where the first phosphodiester bond forms. Post-translationally, phosphorylation on Ser-751 by CK2 controls the 5'-excision activity of ERCC1-XPF endonuclease; phosphorylated protein inhibits the excision activity and thus NER. Dephosphorylation reactivates the 5'-excision step. Phosphorylation has no effect on transcription or the 3'-5' helicase activity.

It is found in the nucleus. The catalysed reaction is Couples ATP hydrolysis with the unwinding of duplex DNA by translocating in the 3'-5' direction.. It carries out the reaction ATP + H2O = ADP + phosphate + H(+). Phosphorylation on Ser-751 by CK2 controls the 5'-excision activity of ERCC1-XPF endonuclease; phosphorylated protein inhibits the excision activity and thus NER. ATPase activity is stimulated by TFIIH subunit p52 (GTF2H4). DNA translocase activity by this subunit in TFIIH is stimulated by XPA, ERCC5/XPG and XFP plus ERCC1. Its function is as follows. ATP-dependent 3'-5' DNA helicase/translocase; binds dsDNA rather than ssDNA, unzipping it in a translocase rather than classical helicase activity. Component of the general transcription and DNA repair factor IIH (TFIIH) core complex. When complexed to CDK-activating kinase (CAK), involved in RNA transcription by RNA polymerase II. The ATPase activity of XPB/ERCC3, but not its helicase activity, is required for DNA opening; it may wrap around the damaged DNA wedging it open, causing localized melting and twisting that allows XPD/ERCC2 helicase to anchor. The ATP-dependent helicase activity of XPB/ERCC3 may be required for promoter escape. Also involved in transcription-coupled nucleotide excision repair (NER) of damaged DNA. In NER, TFIIH acts by opening DNA around the lesion to allow the excision of the damaged oligonucleotide and its replacement by a new DNA fragment. The structure of the TFIIH transcription complex differs from the NER-TFIIH complex; large movements by XPD/ERCC2 and XPB/ERCC3 are stabilized by XPA. This Pongo abelii (Sumatran orangutan) protein is General transcription and DNA repair factor IIH helicase/translocase subunit XPB (ERCC3).